Here is a 404-residue protein sequence, read N- to C-terminus: G2/mitotic-specific cyclin-B1 (404 aa).

The protein belongs to the cyclin family. Cyclin AB subfamily. As to quaternary structure, interacts with the CDK1 protein kinase to form a serine/threonine kinase holoenzyme complex also known as maturation promoting factor (MPF). The cyclin subunit imparts substrate specificity to the complex.

In terms of biological role, essential for the control of the cell cycle at the G2/M (mitosis) transition. The polypeptide is G2/mitotic-specific cyclin-B1 (ccnb1) (Oryzias latipes (Japanese rice fish)).